The following is a 956-amino-acid chain: Glycine dehydrogenase (decarboxylating) 2 (956 aa).

K706 bears the N6-(pyridoxal phosphate)lysine mark.

Belongs to the GcvP family. In terms of assembly, the glycine cleavage system is composed of four proteins: P, T, L and H. Requires pyridoxal 5'-phosphate as cofactor.

It carries out the reaction N(6)-[(R)-lipoyl]-L-lysyl-[glycine-cleavage complex H protein] + glycine + H(+) = N(6)-[(R)-S(8)-aminomethyldihydrolipoyl]-L-lysyl-[glycine-cleavage complex H protein] + CO2. The glycine cleavage system catalyzes the degradation of glycine. The P protein binds the alpha-amino group of glycine through its pyridoxal phosphate cofactor; CO(2) is released and the remaining methylamine moiety is then transferred to the lipoamide cofactor of the H protein. This chain is Glycine dehydrogenase (decarboxylating) 2, found in Colwellia psychrerythraea (strain 34H / ATCC BAA-681) (Vibrio psychroerythus).